The chain runs to 198 residues: MSKRRYLTGKEVQAMMQAVCYGATGARDYCLILLAYRHGMRISELLDLHYQDLDLNEGRINIRRLKNGFSTVHPLRFDEREAVERWTQERANWKGADRTDAIFISRRGSRLSRQQAYRIIRDAGIEAGTVTQTHPHMLRHACGYELAERGADTRLIQDYLGHRNIRHTVRYTASNAARFAGLWERNNLINEKLKREEV.

One can recognise a Tyr recombinase domain in the interval 2–184 (SKRRYLTGKE…NAARFAGLWE (183 aa)). Catalysis depends on residues Arg-41, Lys-66, His-136, Arg-139, and His-162. Tyr-171 acts as the O-(3'-phospho-DNA)-tyrosine intermediate in catalysis.

This sequence belongs to the 'phage' integrase family.

Its function is as follows. FimE is one of the 2 regulatory proteins which control the phase variation of type 1 fimbriae in E.coli. These proteins mediate the periodic inversion of a 300bp DNA segment that harbors the promoter for the fimbrial structural gene, fimA. FimE switches fimA off. The protein is Type 1 fimbriae regulatory protein FimE (fimE) of Escherichia coli O6:H1 (strain CFT073 / ATCC 700928 / UPEC).